A 164-amino-acid chain; its full sequence is Protein-export protein SecB (164 aa).

It belongs to the SecB family. Homotetramer, a dimer of dimers. One homotetramer interacts with 1 SecA dimer.

The protein localises to the cytoplasm. Its function is as follows. One of the proteins required for the normal export of preproteins out of the cell cytoplasm. It is a molecular chaperone that binds to a subset of precursor proteins, maintaining them in a translocation-competent state. It also specifically binds to its receptor SecA. The protein is Protein-export protein SecB of Orientia tsutsugamushi (strain Ikeda) (Rickettsia tsutsugamushi).